A 231-amino-acid chain; its full sequence is 2-C-methyl-D-erythritol 4-phosphate cytidylyltransferase (231 aa).

This sequence belongs to the IspD/TarI cytidylyltransferase family. IspD subfamily. Homodimer.

The enzyme catalyses 2-C-methyl-D-erythritol 4-phosphate + CTP + H(+) = 4-CDP-2-C-methyl-D-erythritol + diphosphate. It participates in isoprenoid biosynthesis; isopentenyl diphosphate biosynthesis via DXP pathway; isopentenyl diphosphate from 1-deoxy-D-xylulose 5-phosphate: step 2/6. Catalyzes the formation of 4-diphosphocytidyl-2-C-methyl-D-erythritol from CTP and 2-C-methyl-D-erythritol 4-phosphate (MEP). This chain is 2-C-methyl-D-erythritol 4-phosphate cytidylyltransferase, found in Citrobacter koseri (strain ATCC BAA-895 / CDC 4225-83 / SGSC4696).